We begin with the raw amino-acid sequence, 493 residues long: UDP-N-acetylmuramoyl-L-alanyl-D-glutamate--2,6-diaminopimelate ligase (493 aa).

Residues Leu-30 and Ser-32 each contribute to the UDP-N-acetyl-alpha-D-muramoyl-L-alanyl-D-glutamate site. An ATP-binding site is contributed by 117–123 (GTNGKTT). UDP-N-acetyl-alpha-D-muramoyl-L-alanyl-D-glutamate-binding positions include Asn-158, 159–160 (TT), Ser-186, Gln-192, and Arg-194. Lys-226 bears the N6-carboxylysine mark. Meso-2,6-diaminopimelate-binding positions include Arg-388, 412–415 (DNPR), Gly-463, and Glu-467. The Meso-diaminopimelate recognition motif motif lies at 412–415 (DNPR).

This sequence belongs to the MurCDEF family. MurE subfamily. It depends on Mg(2+) as a cofactor. Carboxylation is probably crucial for Mg(2+) binding and, consequently, for the gamma-phosphate positioning of ATP.

The protein resides in the cytoplasm. It catalyses the reaction UDP-N-acetyl-alpha-D-muramoyl-L-alanyl-D-glutamate + meso-2,6-diaminopimelate + ATP = UDP-N-acetyl-alpha-D-muramoyl-L-alanyl-gamma-D-glutamyl-meso-2,6-diaminopimelate + ADP + phosphate + H(+). It functions in the pathway cell wall biogenesis; peptidoglycan biosynthesis. Catalyzes the addition of meso-diaminopimelic acid to the nucleotide precursor UDP-N-acetylmuramoyl-L-alanyl-D-glutamate (UMAG) in the biosynthesis of bacterial cell-wall peptidoglycan. This chain is UDP-N-acetylmuramoyl-L-alanyl-D-glutamate--2,6-diaminopimelate ligase, found in Vibrio vulnificus (strain YJ016).